The chain runs to 422 residues: MGIPWVEKYRPKAFSEIVNQEEAKTLLASWICARFRAPKEFCARWAKKREKEVAEAKAVLLAGPPGIGKTTVVHALAREIRYELIELNASDIRTGERIKLVVGRGLKESSLFGYEGKLVLFDEVDGLHVKEDEGGLEAIVEIVETAKVPIVMTANNPYDPKFRPLRDISLVVNLKRLSEEEVVEVLRRICTAEGAKCEEEALRSIAKSSLGDLRAAINDLQMYLSGGRKTLTVDDIKRVGERNPQLSMFEVLDRVYRARWFDEARAVSFNPSFDWEQYFLWALETVPVVYKDVETAAAAYDRLSKADMFLGRIKRMQEWELLPYALELALGGVSQVKNKPRLPPFIKYGFPQRLLLLAKSREARRRREALVEYLAQNLHISRSLARSDIIYVLSALARRDPKVVERLSRALGINAIDVKNLL.

63-70 lines the ATP pocket; the sequence is GPPGIGKT.

This sequence belongs to the activator 1 small subunits family. RfcL subfamily. As to quaternary structure, heteromultimer composed of small subunits (RfcS) and large subunits (RfcL).

Functionally, part of the RFC clamp loader complex which loads the PCNA sliding clamp onto DNA. In Pyrobaculum neutrophilum (strain DSM 2338 / JCM 9278 / NBRC 100436 / V24Sta) (Thermoproteus neutrophilus), this protein is Replication factor C large subunit.